Consider the following 143-residue polypeptide: Transcription antitermination protein NusB (143 aa).

This sequence belongs to the NusB family.

In terms of biological role, involved in transcription antitermination. Required for transcription of ribosomal RNA (rRNA) genes. Binds specifically to the boxA antiterminator sequence of the ribosomal RNA (rrn) operons. The chain is Transcription antitermination protein NusB from Dehalococcoides mccartyi (strain CBDB1).